Here is a 269-residue protein sequence, read N- to C-terminus: Cleavage and polyadenylation specificity factor subunit 4 (269 aa).

5 C3H1-type zinc fingers span residues 35-61 (KSGA…RHIS), 62-89 (GEKT…HEYD), 90-117 (MTKM…HIDP), 118-142 (ESKI…RHRH), and 143-169 (TRRV…HPRF). The segment at 173-199 (MGTTEQPPLPQQTQPPAKQSNNPPLQR) is disordered. 3 positions are modified to phosphoserine: Ser-200, Ser-202, and Ser-212. The CCHC-type zinc-finger motif lies at 243 to 260 (VTCYKCGEKGHYANRCTK). Ser-267 carries the post-translational modification Phosphoserine.

This sequence belongs to the CPSF4/YTH1 family. Component of the cleavage and polyadenylation specificity factor (CPSF) complex, composed of CPSF1, CPSF2, CPSF3, CPSF4 and FIP1L1. Interacts with FIP1L1. In terms of assembly, (Microbial infection) Interacts with influenza A virus NS1 blocks processing of pre-mRNAs, thereby preventing nuclear export of host cell mRNAs.

The protein localises to the nucleus. Functionally, component of the cleavage and polyadenylation specificity factor (CPSF) complex that play a key role in pre-mRNA 3'-end formation, recognizing the AAUAAA signal sequence and interacting with poly(A) polymerase and other factors to bring about cleavage and poly(A) addition. CPSF4 binds RNA polymers with a preference for poly(U). In Homo sapiens (Human), this protein is Cleavage and polyadenylation specificity factor subunit 4 (CPSF4).